Here is a 431-residue protein sequence, read N- to C-terminus: Homeobox protein knotted-1-like 3 (431 aa).

A disordered region spans residues 15 to 47; the sequence is NHFTDQHQPPPPQPPPPPPQQQQHFQEAPPPNW. Over residues 22–34 the composition is skewed to pro residues; sequence QPPPPQPPPPPPQ. The 21-residue stretch at 322-342 folds into the ELK domain; the sequence is ELKHELKQGYKEKIVDIREEI. The homeobox; TALE-type DNA-binding region spans 343-406; that stretch reads LRKRRAGKLP…NQRKRNWHSN (64 aa). A disordered region spans residues 402 to 431; the sequence is NWHSNPSSSTVLKNKRKSNAGDNSGRERFA. A compositionally biased stretch (polar residues) spans 404 to 413; it reads HSNPSSSTVL.

It belongs to the TALE/KNOX homeobox family. May form heterodimeric complex with the TALE/BELL proteins. Interacts with OFP1, OFP2, OFP4, OFP12 and OFP14. Interacts with KNATM-B.

The protein resides in the nucleus. The sequence is that of Homeobox protein knotted-1-like 3 (KNAT3) from Arabidopsis thaliana (Mouse-ear cress).